A 608-amino-acid polypeptide reads, in one-letter code: NADH-quinone oxidoreductase subunit C/D (608 aa).

Residues 1 to 199 (MSAASSLAPQ…EPFHLSTEKE (199 aa)) are NADH dehydrogenase I subunit C. Positions 223–608 (DFMFLNLGPN…IDFVMADVDR (386 aa)) are NADH dehydrogenase I subunit D.

The protein in the N-terminal section; belongs to the complex I 30 kDa subunit family. It in the C-terminal section; belongs to the complex I 49 kDa subunit family. In terms of assembly, NDH-1 is composed of 13 different subunits. Subunits NuoB, CD, E, F, and G constitute the peripheral sector of the complex.

It localises to the cell inner membrane. The catalysed reaction is a quinone + NADH + 5 H(+)(in) = a quinol + NAD(+) + 4 H(+)(out). NDH-1 shuttles electrons from NADH, via FMN and iron-sulfur (Fe-S) centers, to quinones in the respiratory chain. The immediate electron acceptor for the enzyme in this species is believed to be ubiquinone. Couples the redox reaction to proton translocation (for every two electrons transferred, four hydrogen ions are translocated across the cytoplasmic membrane), and thus conserves the redox energy in a proton gradient. The polypeptide is NADH-quinone oxidoreductase subunit C/D (Nitrosospira multiformis (strain ATCC 25196 / NCIMB 11849 / C 71)).